Reading from the N-terminus, the 131-residue chain is Probable histone H2A.3 (131 aa).

Residues 1-23 (MAGRGKQLGSGAAKKSTSRSSKA) are disordered. Residues 9–23 (GSGAAKKSTSRSSKA) show a composition bias toward low complexity.

It belongs to the histone H2A family. The nucleosome is a histone octamer containing two molecules each of H2A, H2B, H3 and H4 assembled in one H3-H4 heterotetramer and two H2A-H2B heterodimers. The octamer wraps approximately 147 bp of DNA. In terms of processing, not ubiquitinated. Expressed in meristems and dividing cells.

The protein resides in the nucleus. Its subcellular location is the chromosome. Its function is as follows. Core component of nucleosome. Nucleosomes wrap and compact DNA into chromatin, limiting DNA accessibility to the cellular machineries which require DNA as a template. Histones thereby play a central role in transcription regulation, DNA repair, DNA replication and chromosomal stability. DNA accessibility is regulated via a complex set of post-translational modifications of histones, also called histone code, and nucleosome remodeling. The sequence is that of Probable histone H2A.3 from Arabidopsis thaliana (Mouse-ear cress).